We begin with the raw amino-acid sequence, 480 residues long: Protein nucleotidyltransferase YdiU (480 aa).

ATP contacts are provided by Gly86, Gly88, Arg89, Lys109, Asp121, Gly122, Arg172, and Arg179. The Proton acceptor role is filled by Asp248. Positions 249 and 258 each coordinate Mg(2+). Asp258 contacts ATP.

Belongs to the SELO family. Mg(2+) serves as cofactor. Requires Mn(2+) as cofactor.

It catalyses the reaction L-seryl-[protein] + ATP = 3-O-(5'-adenylyl)-L-seryl-[protein] + diphosphate. The catalysed reaction is L-threonyl-[protein] + ATP = 3-O-(5'-adenylyl)-L-threonyl-[protein] + diphosphate. It carries out the reaction L-tyrosyl-[protein] + ATP = O-(5'-adenylyl)-L-tyrosyl-[protein] + diphosphate. The enzyme catalyses L-histidyl-[protein] + UTP = N(tele)-(5'-uridylyl)-L-histidyl-[protein] + diphosphate. It catalyses the reaction L-seryl-[protein] + UTP = O-(5'-uridylyl)-L-seryl-[protein] + diphosphate. The catalysed reaction is L-tyrosyl-[protein] + UTP = O-(5'-uridylyl)-L-tyrosyl-[protein] + diphosphate. Its function is as follows. Nucleotidyltransferase involved in the post-translational modification of proteins. It can catalyze the addition of adenosine monophosphate (AMP) or uridine monophosphate (UMP) to a protein, resulting in modifications known as AMPylation and UMPylation. This is Protein nucleotidyltransferase YdiU from Salmonella enteritidis PT4 (strain P125109).